We begin with the raw amino-acid sequence, 268 residues long: Peptide transport system ATP-binding protein SapF (268 aa).

The ABC transporter domain maps to Leu-6–Ile-251. Gly-47–Ser-54 provides a ligand contact to ATP.

It belongs to the ABC transporter superfamily.

It is found in the cell inner membrane. Involved in a peptide intake transport system that plays a role in the resistance to antimicrobial peptides. The sequence is that of Peptide transport system ATP-binding protein SapF from Salmonella typhimurium (strain LT2 / SGSC1412 / ATCC 700720).